Reading from the N-terminus, the 634-residue chain is DNA-directed RNA polymerase subunit gamma (634 aa).

Zn(2+)-binding residues include Cys74, Cys76, Cys89, and Cys92. Mg(2+) is bound by residues Asp471, Asp473, and Asp475.

The protein belongs to the RNA polymerase beta' chain family. RpoC1 subfamily. In terms of assembly, in cyanobacteria the RNAP catalytic core is composed of 2 alpha, 1 beta, 1 beta', 1 gamma and 1 omega subunit. When a sigma factor is associated with the core the holoenzyme is formed, which can initiate transcription. The cofactor is Mg(2+). Zn(2+) serves as cofactor.

The enzyme catalyses RNA(n) + a ribonucleoside 5'-triphosphate = RNA(n+1) + diphosphate. DNA-dependent RNA polymerase catalyzes the transcription of DNA into RNA using the four ribonucleoside triphosphates as substrates. This Synechococcus sp. (strain RCC307) protein is DNA-directed RNA polymerase subunit gamma.